A 665-amino-acid chain; its full sequence is ELMO family protein LMO1 (665 aa).

Forms an active heterodimer with DCK1.

Its subcellular location is the cytoplasm. It localises to the mitochondrion. Its function is as follows. Forms a transiant heterodimeric complex with DCK1, that acts as a guanine nucleotide exchange factor (GEF) for the small GTPase RHO5. DCK1, LMO1 and RHO5 relocate to mitochondria upon oxidative stress and trigger cell death. The DCK1/LMO1/RHO5 signaling module mediates mitochondrial turnover under nitrogen starvation conditions via mitophagy. The DCK1/LMO1/RHO5 signaling module also plays a role in cell wall integrity signaling. This is ELMO family protein LMO1 from Saccharomyces cerevisiae (strain ATCC 204508 / S288c) (Baker's yeast).